Reading from the N-terminus, the 119-residue chain is Non-structural protein 3b (119 aa).

One can recognise a DRBM domain in the interval 3-79 (YVSLLNQVWQ…AARKVCLRLQ (77 aa)).

Interacts with host RUNX1 isoform b.

It is found in the host nucleus. The protein localises to the host nucleolus. The protein resides in the host mitochondrion. In terms of biological role, induces host cell G0/G1 arrest and apoptosis. This Pipistrellus abramus (Japanese pipistrelle) protein is Non-structural protein 3b.